The sequence spans 257 residues: Glucose-1-phosphate cytidylyltransferase (257 aa).

Residues 6 to 10 (LAGGL), 11 to 13 (GTR), Lys23, Ser104, Arg109, and Gly128 each bind substrate. Asp129 and Asp234 together coordinate Mg(2+).

Belongs to the glucose-1-phosphate cytidylyltransferase family. As to quaternary structure, homohexamer. Mg(2+) serves as cofactor.

It catalyses the reaction alpha-D-glucose 1-phosphate + CTP + H(+) = CDP-D-glucose + diphosphate. Its pathway is nucleotide-sugar biosynthesis; CDP-3,6-dideoxy-D-mannose biosynthesis; CDP-3,6-dideoxy-D-mannose from CTP and alpha-D-glucose 1-phosphate: step 1/5. The protein operates within bacterial outer membrane biogenesis; LPS O-antigen biosynthesis. Its function is as follows. Involved in the biosynthesis of the tyvelose, a 3,6-dideoxyhexose found in the O-antigen of the surface lipopolysaccharides. It catalyzes the transfer of a CMP moiety from CTP to glucose 1-phosphate. This enzyme can utilize either CTP or UTP as the nucleotide donor. The polypeptide is Glucose-1-phosphate cytidylyltransferase (rfbF) (Salmonella typhi).